Here is a 141-residue protein sequence, read N- to C-terminus: Large ribosomal subunit protein uL16 (141 aa).

This sequence belongs to the universal ribosomal protein uL16 family. In terms of assembly, part of the 50S ribosomal subunit.

Functionally, binds 23S rRNA and is also seen to make contacts with the A and possibly P site tRNAs. This is Large ribosomal subunit protein uL16 from Microchaete diplosiphon (Fremyella diplosiphon).